The primary structure comprises 642 residues: Mini-chromosome maintenance complex-binding protein (642 aa).

Residues 151-161 (ARVSPSTSYTP) are compositionally biased toward polar residues. The segment at 151 to 200 (ARVSPSTSYTPSRHKRSYEDDEDMDLQPNKQKDQHSGARQAGGLGGLHWR) is disordered. Phosphoserine is present on S154. Phosphothreonine is present on T160. A phosphoserine mark is found at S167 and S298.

Belongs to the MCMBP family. As to quaternary structure, interacts with the MCM complex: associates with the MCM3-7 complex which lacks MCM2, while it does not interact with the MCM complex when MCM2 is present (MCM2-7 complex). Interacts with the RPA complex, when composed of all RPA1, RPA2 and RPA3 components, but not with RPA1 or RPA2 alone.

The protein localises to the nucleus. In terms of biological role, associated component of the MCM complex that acts as a regulator of DNA replication. Binds to the MCM complex during late S phase and promotes the disassembly of the MCM complex from chromatin, thereby acting as a key regulator of pre-replication complex (pre-RC) unloading from replicated DNA. Can dissociate the MCM complex without addition of ATP; probably acts by destabilizing interactions of each individual subunits of the MCM complex. Required for sister chromatid cohesion. This is Mini-chromosome maintenance complex-binding protein (Mcmbp) from Rattus norvegicus (Rat).